A 289-amino-acid polypeptide reads, in one-letter code: Serine/threonine-protein phosphatase Pgam5, mitochondrial (289 aa).

Belongs to the phosphoglycerate mutase family. BPG-dependent PGAM subfamily. In terms of assembly, interacts with Pk92B/ASK1.

It localises to the mitochondrion outer membrane. It catalyses the reaction O-phospho-L-seryl-[protein] + H2O = L-seryl-[protein] + phosphate. The catalysed reaction is O-phospho-L-threonyl-[protein] + H2O = L-threonyl-[protein] + phosphate. Functionally, displays phosphatase activity for serine/threonine residues, and dephosphorylates and activates Pk92B kinase. Has apparently no phosphoglycerate mutase activity. The protein is Serine/threonine-protein phosphatase Pgam5, mitochondrial of Drosophila mojavensis (Fruit fly).